Here is a 62-residue protein sequence, read N- to C-terminus: DNA-directed RNA polymerase subunit Rpo10 (62 aa).

Cys6, Cys9, Cys43, and Cys44 together coordinate Zn(2+).

Belongs to the archaeal Rpo10/eukaryotic RPB10 RNA polymerase subunit family. As to quaternary structure, part of the RNA polymerase complex. Zn(2+) is required as a cofactor.

It localises to the cytoplasm. It catalyses the reaction RNA(n) + a ribonucleoside 5'-triphosphate = RNA(n+1) + diphosphate. Its function is as follows. DNA-dependent RNA polymerase (RNAP) catalyzes the transcription of DNA into RNA using the four ribonucleoside triphosphates as substrates. This chain is DNA-directed RNA polymerase subunit Rpo10, found in Methanosarcina mazei (strain ATCC BAA-159 / DSM 3647 / Goe1 / Go1 / JCM 11833 / OCM 88) (Methanosarcina frisia).